The following is a 111-amino-acid chain: Cytochrome c (111 aa).

The residue at position 1 (Ala1) is an N-acetylalanine. The heme c site is built by Cys22, Cys25, and His26. Lys80 carries the post-translational modification N6,N6,N6-trimethyllysine. Met88 serves as a coordination point for heme c. An N6,N6,N6-trimethyllysine modification is found at Lys94.

This sequence belongs to the cytochrome c family. In terms of processing, binds 1 heme c group covalently per subunit.

It is found in the mitochondrion intermembrane space. Its function is as follows. Electron carrier protein. The oxidized form of the cytochrome c heme group can accept an electron from the heme group of the cytochrome c1 subunit of cytochrome reductase. Cytochrome c then transfers this electron to the cytochrome oxidase complex, the final protein carrier in the mitochondrial electron-transport chain. The polypeptide is Cytochrome c (Nigella damascena (Love-in-a-mist)).